A 448-amino-acid chain; its full sequence is tRNA(Ile)-lysidine synthase (448 aa).

25-30 (SGGSDS) is a binding site for ATP.

It belongs to the tRNA(Ile)-lysidine synthase family.

Its subcellular location is the cytoplasm. The catalysed reaction is cytidine(34) in tRNA(Ile2) + L-lysine + ATP = lysidine(34) in tRNA(Ile2) + AMP + diphosphate + H(+). Ligates lysine onto the cytidine present at position 34 of the AUA codon-specific tRNA(Ile) that contains the anticodon CAU, in an ATP-dependent manner. Cytidine is converted to lysidine, thus changing the amino acid specificity of the tRNA from methionine to isoleucine. In Brucella canis (strain ATCC 23365 / NCTC 10854 / RM-666), this protein is tRNA(Ile)-lysidine synthase.